A 364-amino-acid chain; its full sequence is UDP-N-acetylglucosamine--N-acetylmuramyl-(pentapeptide) pyrophosphoryl-undecaprenol N-acetylglucosamine transferase (364 aa).

UDP-N-acetyl-alpha-D-glucosamine is bound by residues 10–12 (TGG), asparagine 128, arginine 170, serine 199, isoleucine 250, and glutamine 295.

This sequence belongs to the glycosyltransferase 28 family. MurG subfamily.

The protein resides in the cell inner membrane. It carries out the reaction di-trans,octa-cis-undecaprenyl diphospho-N-acetyl-alpha-D-muramoyl-L-alanyl-D-glutamyl-meso-2,6-diaminopimeloyl-D-alanyl-D-alanine + UDP-N-acetyl-alpha-D-glucosamine = di-trans,octa-cis-undecaprenyl diphospho-[N-acetyl-alpha-D-glucosaminyl-(1-&gt;4)]-N-acetyl-alpha-D-muramoyl-L-alanyl-D-glutamyl-meso-2,6-diaminopimeloyl-D-alanyl-D-alanine + UDP + H(+). It participates in cell wall biogenesis; peptidoglycan biosynthesis. In terms of biological role, cell wall formation. Catalyzes the transfer of a GlcNAc subunit on undecaprenyl-pyrophosphoryl-MurNAc-pentapeptide (lipid intermediate I) to form undecaprenyl-pyrophosphoryl-MurNAc-(pentapeptide)GlcNAc (lipid intermediate II). The polypeptide is UDP-N-acetylglucosamine--N-acetylmuramyl-(pentapeptide) pyrophosphoryl-undecaprenol N-acetylglucosamine transferase (Chlorobaculum parvum (strain DSM 263 / NCIMB 8327) (Chlorobium vibrioforme subsp. thiosulfatophilum)).